The chain runs to 547 residues: Immunoglobulin epsilon heavy chain (547 aa).

Glutamine 1 carries the post-translational modification Pyrrolidone carboxylic acid. Ig-like domains lie at 1 to 120 (QVQL…TEVT), 130 to 223 (PSVF…KTFS), 232 to 329 (PTVK…KKCA), 333 to 437 (PRGV…TKTS), and 443 to 542 (PEVY…RAVS). The variable (V) domain, involved in antigen recognition stretch occupies residues 1–124 (QVQLVQSGAE…EGTEVTYTVS (124 aa)). Intrachain disulfides connect cysteine 22/cysteine 96, cysteine 139/cysteine 225, cysteine 153/cysteine 207, cysteine 254/cysteine 312, cysteine 358/cysteine 418, and cysteine 464/cysteine 524. Residues 125 to 547 (GAWTLPSVFP…QRAVSVNPGK (423 aa)) are constant (C) domain. Asparagine 145, asparagine 173, asparagine 219, asparagine 265, asparagine 371, asparagine 383, and asparagine 394 each carry an N-linked (GlcNAc...) asparagine glycan.

In terms of assembly, immunoglobulins are composed of two identical heavy chains and two identical light chains; disulfide-linked.

It is found in the secreted. It localises to the cell membrane. Its function is as follows. Immunoglobulins, also known as antibodies, are membrane-bound or secreted glycoproteins produced by B lymphocytes. In the recognition phase of humoral immunity, the membrane-bound immunoglobulins serve as receptors which, upon binding of a specific antigen, trigger the clonal expansion and differentiation of B lymphocytes into immunoglobulins-secreting plasma cells. Secreted immunoglobulins mediate the effector phase of humoral immunity, which results in the elimination of bound antigens. The antigen binding site is formed by the variable domain of one heavy chain, together with that of its associated light chain. Thus, each immunoglobulin has two antigen binding sites with remarkable affinity for a particular antigen. The variable domains are assembled by a process called V-(D)-J rearrangement and can then be subjected to somatic hypermutations which, after exposure to antigen and selection, allow affinity maturation for a particular antigen. The protein is Immunoglobulin epsilon heavy chain of Homo sapiens (Human).